The chain runs to 501 residues: UDP-N-acetylmuramoyl-L-alanyl-D-glutamate--2,6-diaminopimelate ligase (501 aa).

Ser29 contributes to the UDP-N-acetyl-alpha-D-muramoyl-L-alanyl-D-glutamate binding site. ATP is bound at residue Gly112 to Ser118. Residues Thr161–Thr162, Ser188, and Arg196 contribute to the UDP-N-acetyl-alpha-D-muramoyl-L-alanyl-D-glutamate site. Lys228 carries the post-translational modification N6-carboxylysine. Residues Arg393, Asp417–Arg420, Gly468, and Glu472 each bind meso-2,6-diaminopimelate. Positions Asp417 to Arg420 match the Meso-diaminopimelate recognition motif motif.

It belongs to the MurCDEF family. MurE subfamily. Mg(2+) is required as a cofactor. Carboxylation is probably crucial for Mg(2+) binding and, consequently, for the gamma-phosphate positioning of ATP.

It localises to the cytoplasm. It carries out the reaction UDP-N-acetyl-alpha-D-muramoyl-L-alanyl-D-glutamate + meso-2,6-diaminopimelate + ATP = UDP-N-acetyl-alpha-D-muramoyl-L-alanyl-gamma-D-glutamyl-meso-2,6-diaminopimelate + ADP + phosphate + H(+). It participates in cell wall biogenesis; peptidoglycan biosynthesis. Its function is as follows. Catalyzes the addition of meso-diaminopimelic acid to the nucleotide precursor UDP-N-acetylmuramoyl-L-alanyl-D-glutamate (UMAG) in the biosynthesis of bacterial cell-wall peptidoglycan. This Acidovorax sp. (strain JS42) protein is UDP-N-acetylmuramoyl-L-alanyl-D-glutamate--2,6-diaminopimelate ligase.